A 368-amino-acid chain; its full sequence is MRTLHVDLGERSYPIYIGENLLGDARWFAPHIVGRRVAVISNETVAPLYLETLLKALQGHEVTPVVLPDGEAYKQWETLQLIFDVLLKERHDRKTTLIALGGGVIGDMAGFAAACYQRGVNFIQVPTTLLSQVDSSVGGKTGINHPLGKNMIGAFYQPQAVVIDTASLKTLPSRELSAGLAEVIKYGFICDEPFITWLEAHMDALLALEPTVVTEAIERSCAAKARVVGADERESGVRATLNLGHTFGHAIETQQGYGVWLHGEAVGAGTVMALEMSHRLGWLSAAERDRGIRLLRRAGLPVVPPAEMTAEDFMEHMAVDKKVLDGRLRLVLLQGLGNAVVTGDFPREILDATLRTDYRALADQLGDE.

NAD(+) is bound by residues Asp69–Lys74, Gly103–Asp107, Thr127–Thr128, Lys140, and Lys149. Zn(2+) contacts are provided by Glu182, His245, and His262.

It belongs to the sugar phosphate cyclases superfamily. Dehydroquinate synthase family. It depends on NAD(+) as a cofactor. The cofactor is Co(2+). Zn(2+) serves as cofactor.

The protein localises to the cytoplasm. It catalyses the reaction 7-phospho-2-dehydro-3-deoxy-D-arabino-heptonate = 3-dehydroquinate + phosphate. It functions in the pathway metabolic intermediate biosynthesis; chorismate biosynthesis; chorismate from D-erythrose 4-phosphate and phosphoenolpyruvate: step 2/7. Catalyzes the conversion of 3-deoxy-D-arabino-heptulosonate 7-phosphate (DAHP) to dehydroquinate (DHQ). This is 3-dehydroquinate synthase from Pseudomonas aeruginosa (strain ATCC 15692 / DSM 22644 / CIP 104116 / JCM 14847 / LMG 12228 / 1C / PRS 101 / PAO1).